The chain runs to 71 residues: Sec-independent protein translocase protein TatA (71 aa).

The chain crosses the membrane as a helical span at residues 1 to 21; that stretch reads MGSFSMGHWLIVLAIIVLLFG. Residues 41–57 show a composition bias toward basic and acidic residues; sequence KEMEDETPVEKIEKADS. The tract at residues 41–71 is disordered; sequence KEMEDETPVEKIEKADSETQSTKQNETTKNV. Positions 58–71 are enriched in polar residues; it reads ETQSTKQNETTKNV.

This sequence belongs to the TatA/E family. In terms of assembly, the Tat system comprises two distinct complexes: a TatABC complex, containing multiple copies of TatA, TatB and TatC subunits, and a separate TatA complex, containing only TatA subunits. Substrates initially bind to the TatABC complex, which probably triggers association of the separate TatA complex to form the active translocon.

The protein localises to the cell inner membrane. Its function is as follows. Part of the twin-arginine translocation (Tat) system that transports large folded proteins containing a characteristic twin-arginine motif in their signal peptide across membranes. TatA could form the protein-conducting channel of the Tat system. The sequence is that of Sec-independent protein translocase protein TatA from Campylobacter fetus subsp. fetus (strain 82-40).